The chain runs to 511 residues: Probable endopeptidase p60 (511 aa).

Positions 1–27 (MNMKKATIVSAAGIAVTAFAAPSVVSA) are cleaved as a signal peptide. The LysM 1 domain occupies 28-71 (NTVVVASGDTLWGIASKTGTTVDQLKQLNKLDSDRIVPGQKLTI). Residues 78-142 (KVEKSVSATW…VNGKYLSDAK (65 aa)) enclose the SH3b domain. Residues 175 to 218 (STYKVKSGDTIWALSVKYGVPVQKLIEWNNLSSSSIYVGQTIAV) enclose the LysM 2 domain. Composition is skewed to low complexity over residues 229 to 257 (TVKQ…QAKP) and 264 to 282 (KPAV…AKPA). The interval 229 to 291 (TVKQAAPAKV…AVEQKASTPA (63 aa)) is disordered. In terms of domain architecture, LysM 3 spans 297–341 (ATYKVQNGDSLGKIASLFKVSVADLTNWNNLNATITIYAGQELSV). 2 stretches are compositionally biased toward low complexity: residues 347–362 (KPKP…SKPA) and 372–390 (TNTT…NTSQ). A disordered region spans residues 347-390 (KPKPAAPAKPAVSKPATSTPAKVTPTNTTNNSTPTTNVNNNTSQ). Positions 393-511 (SASFSALYAE…GQYLVGFGRV (119 aa)) constitute a NlpC/P60 domain. The Nucleophile role is filled by Cys423. His473 functions as the Proton acceptor in the catalytic mechanism. Asp485 is an active-site residue.

This sequence belongs to the peptidase C40 family.

This major extracellular protein may be involved in the invasion of non-professional phagocytic cells by Listeria. The chain is Probable endopeptidase p60 (iap) from Listeria grayi (Listeria murrayi).